The primary structure comprises 337 residues: Casein kinase I isoform alpha (337 aa).

Alanine 2 is subject to N-acetylalanine. Serine 4 carries the phosphoserine modification. Lysine 8 bears the N6-acetyllysine mark. One can recognise a Protein kinase domain in the interval 17–285 (YKLVRKIGSG…YLRQLFRILF (269 aa)). ATP is bound by residues 23–31 (IGSGSFGDI) and lysine 46. The Proton acceptor role is filled by aspartate 136. Over residues 309–325 (AASSSGQGQQAQTPTGK) the composition is skewed to low complexity. The segment at 309-337 (AASSSGQGQQAQTPTGKQTDKTKSNMKGF) is disordered.

This sequence belongs to the protein kinase superfamily. CK1 Ser/Thr protein kinase family. Casein kinase I subfamily. Interacts with the Axin complex. Interacts with TUT1, leading to TUT1 phosphorylation. Interacts with FAM83A, FAM83B, FAM83C, FAM83D, FAM83E, FAM83F, FAM83G and FAM83H (via DUF1669). Interaction with FAM83H recruits CSNK1A1 to keratin filaments. Post-translationally, phosphorylated by MTOR in response to mitogenic stimulation, leading to its activation.

The protein localises to the cytoplasm. Its subcellular location is the cytoskeleton. It is found in the microtubule organizing center. It localises to the centrosome. The protein resides in the chromosome. The protein localises to the centromere. Its subcellular location is the kinetochore. It is found in the nucleus speckle. It localises to the cilium basal body. The protein resides in the spindle. The catalysed reaction is L-seryl-[protein] + ATP = O-phospho-L-seryl-[protein] + ADP + H(+). It carries out the reaction L-threonyl-[protein] + ATP = O-phospho-L-threonyl-[protein] + ADP + H(+). Casein kinases are operationally defined by their preferential utilization of acidic proteins such as caseins as substrates. Can phosphorylate a large number of proteins. Participates in Wnt signaling. Phosphorylates CTNNB1 at 'Ser-45'. May phosphorylate PER1 and PER2. May play a role in segregating chromosomes during mitosis. May play a role in keratin cytoskeleton disassembly and thereby, it may regulate epithelial cell migration. Acts as a positive regulator of mTORC1 and mTORC2 signaling in response to nutrients by mediating phosphorylation of DEPTOR inhibitor. Acts as an inhibitor of NLRP3 inflammasome assembly by mediating phosphorylation of NLRP3. This is Casein kinase I isoform alpha (Csnk1a1) from Mus musculus (Mouse).